A 311-amino-acid chain; its full sequence is Lipoyl synthase (311 aa).

Residues Cys47, Cys52, Cys58, Cys73, Cys77, Cys80, and Ser286 each coordinate [4Fe-4S] cluster. One can recognise a Radical SAM core domain in the interval Trp59 to Phe276.

This sequence belongs to the radical SAM superfamily. Lipoyl synthase family. It depends on [4Fe-4S] cluster as a cofactor.

Its subcellular location is the cytoplasm. The catalysed reaction is [[Fe-S] cluster scaffold protein carrying a second [4Fe-4S](2+) cluster] + N(6)-octanoyl-L-lysyl-[protein] + 2 oxidized [2Fe-2S]-[ferredoxin] + 2 S-adenosyl-L-methionine + 4 H(+) = [[Fe-S] cluster scaffold protein] + N(6)-[(R)-dihydrolipoyl]-L-lysyl-[protein] + 4 Fe(3+) + 2 hydrogen sulfide + 2 5'-deoxyadenosine + 2 L-methionine + 2 reduced [2Fe-2S]-[ferredoxin]. The protein operates within protein modification; protein lipoylation via endogenous pathway; protein N(6)-(lipoyl)lysine from octanoyl-[acyl-carrier-protein]: step 2/2. Catalyzes the radical-mediated insertion of two sulfur atoms into the C-6 and C-8 positions of the octanoyl moiety bound to the lipoyl domains of lipoate-dependent enzymes, thereby converting the octanoylated domains into lipoylated derivatives. In Chlamydia trachomatis serovar D (strain ATCC VR-885 / DSM 19411 / UW-3/Cx), this protein is Lipoyl synthase.